A 180-amino-acid chain; its full sequence is MIIYLHGFDSNSPGNHEKVLQLQFIDPDVRLISYSTRHPKHDMQHLLKEVDKMLQLNVDERPLICGVGLGGYWAERIGFLCDIRQVVFNPNLFPEENMEGKIDRPEEYADIATKCVSNFREKNRDRCLAILSRQDEALNSHRAAEFLHHYYEIVWDEEQTHKFKNISPHLQRIKAFKTLG.

The protein belongs to the UPF0227 family.

The protein is UPF0227 protein Ent638_1623 of Enterobacter sp. (strain 638).